Here is a 313-residue protein sequence, read N- to C-terminus: Methionyl-tRNA formyltransferase (313 aa).

110–113 (SLLP) contributes to the (6S)-5,6,7,8-tetrahydrofolate binding site.

This sequence belongs to the Fmt family.

The catalysed reaction is L-methionyl-tRNA(fMet) + (6R)-10-formyltetrahydrofolate = N-formyl-L-methionyl-tRNA(fMet) + (6S)-5,6,7,8-tetrahydrofolate + H(+). In terms of biological role, attaches a formyl group to the free amino group of methionyl-tRNA(fMet). The formyl group appears to play a dual role in the initiator identity of N-formylmethionyl-tRNA by promoting its recognition by IF2 and preventing the misappropriation of this tRNA by the elongation apparatus. This Lysinibacillus sphaericus (strain C3-41) protein is Methionyl-tRNA formyltransferase.